The chain runs to 231 residues: UPF0173 metal-dependent hydrolase AF_1265 (231 aa).

This sequence belongs to the UPF0173 family.

This Archaeoglobus fulgidus (strain ATCC 49558 / DSM 4304 / JCM 9628 / NBRC 100126 / VC-16) protein is UPF0173 metal-dependent hydrolase AF_1265.